The primary structure comprises 400 residues: Zinc finger protein 514 (400 aa).

The KRAB domain occupies 1–72 (MTFEDVAVEF…EREISTGAHS (72 aa)). 7 consecutive C2H2-type zinc fingers follow at residues 204–226 (CKCN…QRCH), 232–254 (YECS…QRTH), 260–282 (YECS…YRFH), 288–310 (YKCN…QRTH), 316–338 (YECR…YRFH), 344–366 (YKCN…YRFH), and 372–394 (YKCN…QRSH).

This sequence belongs to the krueppel C2H2-type zinc-finger protein family.

Its subcellular location is the nucleus. Its function is as follows. May be involved in transcriptional regulation. The polypeptide is Zinc finger protein 514 (ZNF514) (Homo sapiens (Human)).